A 102-amino-acid chain; its full sequence is MSSGMCPVCGLPKELCICEEVAKEQQRITVKVNRRRYGKEVTVVEGFDASEIDLHELSTYLKSKFACGGTVKGNTVELQGNHLTRMKEVLMEKGFSAEQIKN.

Belongs to the SUI1 family.

The chain is Protein translation factor SUI1 homolog from Methanosarcina mazei (strain ATCC BAA-159 / DSM 3647 / Goe1 / Go1 / JCM 11833 / OCM 88) (Methanosarcina frisia).